We begin with the raw amino-acid sequence, 172 residues long: Small ribosomal subunit protein uS5 (172 aa).

The region spanning 16–79 (LKDRLVAINR…EAAKKNLIRV (64 aa)) is the S5 DRBM domain.

It belongs to the universal ribosomal protein uS5 family. As to quaternary structure, part of the 30S ribosomal subunit. Contacts proteins S4 and S8.

With S4 and S12 plays an important role in translational accuracy. Its function is as follows. Located at the back of the 30S subunit body where it stabilizes the conformation of the head with respect to the body. The polypeptide is Small ribosomal subunit protein uS5 (Porphyromonas gingivalis (strain ATCC BAA-308 / W83)).